A 145-amino-acid polypeptide reads, in one-letter code: Bacilliredoxin GK1781 (145 aa).

It belongs to the bacilliredoxin family.

The polypeptide is Bacilliredoxin GK1781 (Geobacillus kaustophilus (strain HTA426)).